Reading from the N-terminus, the 218-residue chain is MELKVNIAIDGPSGVGKSTVSKLIAKKLNYTFINSGSIYRTIAYHVIKNDIDINNEKDVISSLDSLEFSLSKNEELFYKGENITLILRSEQISISTPVVSKIPEVREFVTSYIQKMTKGKKGFIIDGRDTTFKVMPHADVKIFLWATAEERAQRRVDQNHQLGYNSNYDEVLYEIKKRDHQDMNREHDPLHKTEDSILIDCTNMKIDEVVNKIISLIK.

11 to 19 (GPSGVGKST) is an ATP binding site.

This sequence belongs to the cytidylate kinase family. Type 1 subfamily.

Its subcellular location is the cytoplasm. It carries out the reaction CMP + ATP = CDP + ADP. It catalyses the reaction dCMP + ATP = dCDP + ADP. The chain is Cytidylate kinase from Mycoplasmopsis synoviae (strain 53) (Mycoplasma synoviae).